The following is a 523-amino-acid chain: Factor arrest protein 8 (523 aa).

Positions 26-76 (TKNERDRITWELERSEMKARIAELEGENRDLKHQLNQIQSKAVSPEGEKEE) form a coiled coil. Residues 61–80 (NQIQSKAVSPEGEKEEKHVP) form a disordered region. Residues 71–80 (EGEKEEKHVP) show a composition bias toward basic and acidic residues. Ser115 is modified (phosphoserine). Phosphothreonine is present on Thr132. The interval 150–171 (ALLDTKPNPKQGPSESPSPTKV) is disordered. A compositionally biased stretch (polar residues) spans 160 to 171 (QGPSESPSPTKV).

As to quaternary structure, component of a complex at least composed of FAR3, FAR7, FAR8, FAR10, FAR11 and VPS64.

Its subcellular location is the cytoplasm. It localises to the endoplasmic reticulum. In terms of biological role, participates in the control of the reentry into the cell cycle following pheromone treatment. The chain is Factor arrest protein 8 (FAR8) from Saccharomyces cerevisiae (strain ATCC 204508 / S288c) (Baker's yeast).